Consider the following 296-residue polypeptide: Phosphoribosylaminoimidazole-succinocarboxamide synthase (296 aa).

The protein belongs to the SAICAR synthetase family.

The enzyme catalyses 5-amino-1-(5-phospho-D-ribosyl)imidazole-4-carboxylate + L-aspartate + ATP = (2S)-2-[5-amino-1-(5-phospho-beta-D-ribosyl)imidazole-4-carboxamido]succinate + ADP + phosphate + 2 H(+). It participates in purine metabolism; IMP biosynthesis via de novo pathway; 5-amino-1-(5-phospho-D-ribosyl)imidazole-4-carboxamide from 5-amino-1-(5-phospho-D-ribosyl)imidazole-4-carboxylate: step 1/2. The polypeptide is Phosphoribosylaminoimidazole-succinocarboxamide synthase (Geobacter sulfurreducens (strain ATCC 51573 / DSM 12127 / PCA)).